Consider the following 79-residue polypeptide: MTVEEKIIDAFDRLFMEDVSDIKDEDLFDAGVLDSLGTVELIVELENLFEIKVPISEFGREDWNTVNKIVEGVKELQNA.

The 77-residue stretch at 1–77 folds into the Carrier domain; the sequence is MTVEEKIIDA…KIVEGVKELQ (77 aa). An O-(pantetheine 4'-phosphoryl)serine modification is found at Ser-35.

Belongs to the DltC family. Post-translationally, 4'-phosphopantetheine is transferred from CoA to a specific serine of apo-DCP.

It localises to the cytoplasm. Its pathway is cell wall biogenesis; lipoteichoic acid biosynthesis. In terms of biological role, carrier protein involved in the D-alanylation of lipoteichoic acid (LTA). The loading of thioester-linked D-alanine onto DltC is catalyzed by D-alanine--D-alanyl carrier protein ligase DltA. The DltC-carried D-alanyl group is further transferred to cell membrane phosphatidylglycerol (PG) by forming an ester bond, probably catalyzed by DltD. D-alanylation of LTA plays an important role in modulating the properties of the cell wall in Gram-positive bacteria, influencing the net charge of the cell wall. The protein is D-alanyl carrier protein of Streptococcus uberis (strain ATCC BAA-854 / 0140J).